Reading from the N-terminus, the 197-residue chain is Adenylyl-sulfate kinase (197 aa).

31–38 (GLSGAGKS) is an ATP binding site. The active-site Phosphoserine intermediate is Ser105.

It belongs to the APS kinase family.

It catalyses the reaction adenosine 5'-phosphosulfate + ATP = 3'-phosphoadenylyl sulfate + ADP + H(+). It functions in the pathway sulfur metabolism; hydrogen sulfide biosynthesis; sulfite from sulfate: step 2/3. Catalyzes the synthesis of activated sulfate. The polypeptide is Adenylyl-sulfate kinase (Aeromonas hydrophila subsp. hydrophila (strain ATCC 7966 / DSM 30187 / BCRC 13018 / CCUG 14551 / JCM 1027 / KCTC 2358 / NCIMB 9240 / NCTC 8049)).